Reading from the N-terminus, the 1203-residue chain is DNA-directed RNA polymerase I subunit RPA135 (1203 aa).

The residue at position 2 (Ser2) is an N-acetylserine. At Ser81 the chain carries Phosphoserine. The C4-type zinc-finger motif lies at 1104 to 1131; that stretch reads CRECGSILTTQQSVPRIGSISTVCCRRC. A Phosphoserine modification is found at Ser1156.

Belongs to the RNA polymerase beta chain family. As to quaternary structure, component of the RNA polymerase I (Pol I) complex consisting of 14 subunits: RPA135, RPA190, RPC40, RPA14, RPB5, RPO26, RPA43, RPB8, RPA12, RPB10, RPC19, RPC10, RPA49 and RPA34. The complex is composed of a horseshoe-shaped core containing ten subunits (RPA135, RPA190, RPB5, RPO26, RPB8, RPB10, RPC10, RPA12, RPC19 and RPC40) where RPA135 and RPA190 form the DNA-binding cleft. Outside of the core, RPA14 and RPA43 form the stalk that mediates interactions with transcription initiation factors and newly synthesized RNA.

It localises to the nucleus. The protein resides in the nucleolus. The enzyme catalyses RNA(n) + a ribonucleoside 5'-triphosphate = RNA(n+1) + diphosphate. Functionally, DNA-dependent RNA polymerases catalyze the transcription of DNA into RNA using the four ribonucleoside triphosphates as substrates. Component of RNA polymerase I (Pol I) which synthesizes ribosomal RNA precursors. Besides, RNA polymerase I has intrinsic RNA cleavage activity. RPA190 and RPA135 both contribute to the polymerase catalytic activity and together form the Pol I active center. In addition, subunit RPA12 contributes a catalytic zinc ribbon that is required for RNA cleavage by Pol I. A single stranded DNA template strand of the promoter is positioned within the central active site cleft of Pol I. A bridging helix emanates from RPA190 and crosses the cleft near the catalytic site and is thought to promote translocation of Pol I by acting as a ratchet that moves the RNA-DNA hybrid through the active site by switching from straight to bent conformations at each step of nucleotide addition. This chain is DNA-directed RNA polymerase I subunit RPA135 (RPA135), found in Saccharomyces cerevisiae (strain ATCC 204508 / S288c) (Baker's yeast).